The sequence spans 497 residues: MTSKKFSDKKNNYDAILVGAGIMSGTLALLLTEILPELKILIIEKLKIPGSESSGAFNNAGTGHAANCELNYTPLDDYGHLKIEKALSINRSFEKSMSLWASLYSSQKIDIKKFLKFIPHISFVTGSENVSFLKKRFKKMTEYKEFEDMEFSSSFNQISSWAPLITKSRNPLDEVAATRVKRGTDINFEVLTREYLKYISKNKNVEISYETELNDLKKTSNKEWELNISMEGRKVNLKTSYVFLGAGGKTINYLQKSNIPEAKVYGGFPVSGKWLICEENSLTEKHNAKVYGRADIGSPPMSVPHLDTRWIEGKKFLLYGPFAGFTTKFLKQGSYLDLFNSLKKNNLLSMLDVGIKNNDLINYLFSQSIKSHKSRVENLRNMMPSADPSNWYLENAGQRVQIIKKTKKGGSLKFGTEIVNAADGSLSALLGASPGASTAVSIMIEVLKKSCLFTLDKSILEQKISHLLYESELKNQNENDFLENLKKRNNSILGFHP.

It belongs to the MQO family. The cofactor is FAD.

It carries out the reaction (S)-malate + a quinone = a quinol + oxaloacetate. It participates in carbohydrate metabolism; tricarboxylic acid cycle; oxaloacetate from (S)-malate (quinone route): step 1/1. The chain is Probable malate:quinone oxidoreductase from Prochlorococcus marinus (strain MIT 9515).